Consider the following 272-residue polypeptide: MEACCLLQLPQRLLLLGAAALTATALETADLAELCGQTWQGDGLLLRSHAASRRFYFVAPDTDCGLWVQAAAPGDRIRFQFRFFLVYSLTPAPPALNTSSPAPADPCAPGSYLQFYEGPPGAPRPLGSPLCGLNIPVPVASSGPFLGLRLVTRGRQPRVDFVGEVTSFRLGPCGAYFRCQNGRCIPSSLVCDPWGMDNCGDGSDQGSWSPADCRGPSPVPSQTGSTDAHTSRSLTPSPALGSAGSLWIAAERSSPAGRDPTRQDAALEGSTE.

Residues 1–25 (MEACCLLQLPQRLLLLGAAALTATA) form the signal peptide. Residues 26 to 233 (LETADLAELC…GSTDAHTSRS (208 aa)) lie on the Extracellular side of the membrane. Asparagine 97 carries an N-linked (GlcNAc...) asparagine glycan. The 43-residue stretch at 172–214 (PCGAYFRCQNGRCIPSSLVCDPWGMDNCGDGSDQGSWSPADCR) folds into the LDL-receptor class A domain. 3 cysteine pairs are disulfide-bonded: cysteine 173–cysteine 184, cysteine 179–cysteine 199, and cysteine 191–cysteine 213. Positions 202-272 (GSDQGSWSPA…QDAALEGSTE (71 aa)) are disordered. A compositionally biased stretch (polar residues) spans 220–236 (PSQTGSTDAHTSRSLTP). Residues 234–250 (LTPSPALGSAGSLWIAA) form a helical membrane-spanning segment. Residues 251–272 (ERSSPAGRDPTRQDAALEGSTE) lie on the Cytoplasmic side of the membrane.

The protein belongs to the LDLR family.

The protein localises to the membrane. This chain is Low-density lipoprotein receptor class A domain-containing protein 2 (LDLRAD2), found in Homo sapiens (Human).